The sequence spans 204 residues: High frequency lysogenization protein HflD homolog (204 aa).

It belongs to the HflD family.

It is found in the cytoplasm. It localises to the cell inner membrane. The chain is High frequency lysogenization protein HflD homolog from Xanthomonas euvesicatoria pv. vesicatoria (strain 85-10) (Xanthomonas campestris pv. vesicatoria).